The chain runs to 200 residues: Flavin prenyltransferase UbiX (200 aa).

Residues 15 to 17 (GAS), Thr41, 102 to 105 (SMGT), and Arg137 each bind FMN. Positions 167 and 183 each coordinate dimethylallyl phosphate.

This sequence belongs to the UbiX/PAD1 family.

It carries out the reaction dimethylallyl phosphate + FMNH2 = prenylated FMNH2 + phosphate. Flavin prenyltransferase that catalyzes the synthesis of the prenylated FMN cofactor (prenyl-FMN) for 4-hydroxy-3-polyprenylbenzoic acid decarboxylase UbiD. The prenyltransferase is metal-independent and links a dimethylallyl moiety from dimethylallyl monophosphate (DMAP) to the flavin N5 and C6 atoms of FMN. The sequence is that of Flavin prenyltransferase UbiX from Alkalihalophilus pseudofirmus (strain ATCC BAA-2126 / JCM 17055 / OF4) (Bacillus pseudofirmus).